Reading from the N-terminus, the 265-residue chain is MEDRNNIYFFYKHTKSMQEAVEPLKQLATSQGLNVVDDVQKANIIVSVGGNNAFLQATRKTNFRSDCLYVGVSTDREGFYPDFTINEIDKMFEAFENQNIEVKRLSTLEVTIDDEKPFYCLNECSIRSNVIKTFVLEVFIDDMHFETFRGDGMIVSTPTGSTAYNKSVRGAVVDPRLPSLQVSEIASLNNNTYRTLGTSFLLSGDRTLRLKVVQDGNDFPIIGADNEALSIRHAEDIKIRLSDKQVKVLKLKDNTFWHKVQRNFL.

The active-site Proton acceptor is N51. NAD(+)-binding positions include 122–123 (NE), R149, D151, 162–167 (TAYNKS), A186, and N226.

The protein belongs to the NAD kinase family. It depends on a divalent metal cation as a cofactor.

It localises to the cytoplasm. The enzyme catalyses NAD(+) + ATP = ADP + NADP(+) + H(+). In terms of biological role, involved in the regulation of the intracellular balance of NAD and NADP, and is a key enzyme in the biosynthesis of NADP. Catalyzes specifically the phosphorylation on 2'-hydroxyl of the adenosine moiety of NAD to yield NADP. This Halalkalibacterium halodurans (strain ATCC BAA-125 / DSM 18197 / FERM 7344 / JCM 9153 / C-125) (Bacillus halodurans) protein is NAD kinase 2.